The chain runs to 347 residues: Spermidine/putrescine import ATP-binding protein PotA (347 aa).

The 233-residue stretch at 6–238 (LEIKNLSHYY…PKTKFVADFI (233 aa)) folds into the ABC transporter domain. 40 to 47 (GPSGCGKT) provides a ligand contact to ATP.

It belongs to the ABC transporter superfamily. Spermidine/putrescine importer (TC 3.A.1.11.1) family. In terms of assembly, the complex is composed of two ATP-binding proteins (PotA), two transmembrane proteins (PotB and PotC) and a solute-binding protein (PotD).

The protein localises to the cell inner membrane. The enzyme catalyses ATP + H2O + polyamine-[polyamine-binding protein]Side 1 = ADP + phosphate + polyamineSide 2 + [polyamine-binding protein]Side 1.. Part of the ABC transporter complex PotABCD involved in spermidine/putrescine import. Responsible for energy coupling to the transport system. The protein is Spermidine/putrescine import ATP-binding protein PotA of Borreliella afzelii (strain PKo) (Borrelia afzelii).